A 233-amino-acid polypeptide reads, in one-letter code: Pyridoxal phosphate homeostasis protein (233 aa).

K35 bears the N6-(pyridoxal phosphate)lysine mark.

The protein belongs to the pyridoxal phosphate-binding protein YggS/PROSC family.

Its function is as follows. Pyridoxal 5'-phosphate (PLP)-binding protein, which is involved in PLP homeostasis. This chain is Pyridoxal phosphate homeostasis protein, found in Pasteurella multocida (strain Pm70).